The following is a 295-amino-acid chain: Vesicle-associated protein 4-2 (295 aa).

Positions 1-10 (MTMTEEKPTS) are enriched in basic and acidic residues. Positions 1–99 (MTMTEEKPTS…PSPSVSSVAK (99 aa)) are disordered. Low complexity predominate over residues 31–53 (NAASSAATSPFPSGASSSSTSSH). A compositionally biased stretch (basic residues) spans 54-71 (LHNHHQHHHQHHHQHHHQ). Over residues 83 to 98 (GQNQHPTPSPSVSSVA) the composition is skewed to polar residues. The MSP domain occupies 107 to 229 (RLKLDPSEKL…KEQILRVIFL (123 aa)). Basic and acidic residues predominate over residues 249-263 (DAAVEARKKPPEETG). A disordered region spans residues 249 to 270 (DAAVEARKKPPEETGPKMIGEG). Position 294 is a phosphoserine (S294).

Belongs to the VAMP-associated protein (VAP) (TC 9.B.17) family.

Its function is as follows. May play a role in vesicle trafficking. The protein is Vesicle-associated protein 4-2 (PVA42) of Arabidopsis thaliana (Mouse-ear cress).